Consider the following 181-residue polypeptide: MTEDNNKAAGAKPRPARQVRTGLTSTGARKASAKSNRSRAREFALQALYQHLVGRNDPTEIDHFTRDLAGFHKADAAHYDALLHGSIEGAEQLDALIRPLLDRKFEEISPIEHAVMWIGVYEFQHCLDVPWRVVLNECIELAKEFGGTDGHKYVNAVLNGLAPQLRAAEVEADRASGKARA.

The interval 1–36 (MTEDNNKAAGAKPRPARQVRTGLTSTGARKASAKSN) is disordered.

Belongs to the NusB family.

Its function is as follows. Involved in transcription antitermination. Required for transcription of ribosomal RNA (rRNA) genes. Binds specifically to the boxA antiterminator sequence of the ribosomal RNA (rrn) operons. This chain is Transcription antitermination protein NusB, found in Variovorax paradoxus (strain S110).